Here is a 767-residue protein sequence, read N- to C-terminus: Probable ubiquitin carboxyl-terminal hydrolase creB (767 aa).

Positions 49–462 constitute a USP domain; sequence YGMENYGNTC…CAYVLFYQET (414 aa). The Nucleophile role is filled by cysteine 58. 2 disordered regions span residues 107 to 140 and 232 to 263; these read EAEA…DSPE and ASKQ…KTPN. The span at 250-263 shows a compositional bias: polar residues; sequence SVDQSSSTGSKTPN. Catalysis depends on histidine 413, which acts as the Proton acceptor. Residues 490–767 form a disordered region; that stretch reads LKQNGFPQSP…LRKKSFSILS (278 aa). Composition is skewed to low complexity over residues 540–554 and 564–573; these read ESAP…SPLS and ERVTTVATPP. A coiled-coil region spans residues 574-641; the sequence is KNDALAKKER…ASKAEEDRRL (68 aa). A compositionally biased stretch (basic and acidic residues) spans 577-650; that stretch reads ALAKKERARE…LSHENGKEKQ (74 aa). Residues 656 to 667 show a composition bias toward basic residues; that stretch reads RLKRGSKSLSHR. Positions 690–700 are enriched in polar residues; it reads STLSQTGPTSE. Residues 701 to 713 show a composition bias toward low complexity; it reads QQQQQQQQQQQQQ. A compositionally biased stretch (basic and acidic residues) spans 731 to 749; the sequence is TIREDEQVNHKDSKHERTG. Positions 750-767 are enriched in basic residues; it reads HGKWRSFSLRKKSFSILS.

This sequence belongs to the peptidase C19 family. In terms of assembly, interacts with creA, creC and qutD.

The enzyme catalyses Thiol-dependent hydrolysis of ester, thioester, amide, peptide and isopeptide bonds formed by the C-terminal Gly of ubiquitin (a 76-residue protein attached to proteins as an intracellular targeting signal).. In terms of biological role, ubiquitin thioesterase component of the regulatory network controlling carbon source utilization through ubiquitination and deubiquitination involving creA, creB, creC, creD and acrB. Deubiquitinates the creA catabolic repressor and the quinate permease qutD. Also plays a role in response to carbon starvation and the control of extracellular proteases activity. This chain is Probable ubiquitin carboxyl-terminal hydrolase creB (creB), found in Aspergillus fumigatus (strain CBS 144.89 / FGSC A1163 / CEA10) (Neosartorya fumigata).